Reading from the N-terminus, the 951-residue chain is 5'-3' exoribonuclease 2 (951 aa).

The CCHC-type zinc-finger motif lies at 262–278 (PCALCNQFGHEVKDCEG). N6-acetyllysine is present on K286. Residues 408–508 (KDDEDSFRRR…SDSEPEPEDN (101 aa)) form a disordered region. Over residues 416-426 (RRQKEKRKRMK) the composition is skewed to basic residues. T439 bears the Phosphothreonine mark. 2 stretches are compositionally biased toward polar residues: residues 445-458 (SRNS…SNPR) and 467-485 (QRNS…SDGS). Phosphoserine is present on residues S448, S471, S473, S475, S482, S487, S499, S501, and S678. Residues R824, R847, and R851 each carry the asymmetric dimethylarginine; alternate modification. Residues R824, R847, and R851 each carry the omega-N-methylarginine; alternate modification. R880 carries the post-translational modification Asymmetric dimethylarginine. An Asymmetric dimethylarginine; alternate modification is found at R883. R883 carries the omega-N-methylarginine; alternate modification. At R895 the chain carries Omega-N-methylarginine. Residues 907 to 951 (NQYQMLGGPGGYPPRRDDHRGGRQGYPREGRKYPLPPPSGRYSWN) form a disordered region. Residues 920–938 (PRRDDHRGGRQGYPREGRK) are compositionally biased toward basic and acidic residues. R947 bears the Asymmetric dimethylarginine; alternate mark. The residue at position 947 (R947) is an Omega-N-methylarginine; alternate.

This sequence belongs to the 5'-3' exonuclease family. XRN2/RAT1 subfamily. In terms of assembly, interacts with POLR2A and SMN1/SMN2. Interacts with CDKN2AIP and NKRF. Interacts with CDKN2AIPNL; the interaction is direct. Interacts with TRIM71 (via NHL repeats) in an RNA-dependent manner. Interacts with DHX34; the interaction is RNA-independent. Expressed in the spleen, testis, heart, brain, lung, liver, skeletal muscle, and kidney.

It is found in the nucleus. Its subcellular location is the nucleolus. Functionally, possesses 5'-&gt;3' exoribonuclease activity. May promote the termination of transcription by RNA polymerase II. During transcription termination, cleavage at the polyadenylation site liberates a 5' fragment which is subsequently processed to form the mature mRNA and a 3' fragment which remains attached to the elongating polymerase. The processive degradation of this 3' fragment by this protein may promote termination of transcription. Binds to RNA polymerase II (RNAp II) transcription termination R-loops formed by G-rich pause sites. This is 5'-3' exoribonuclease 2 (Xrn2) from Mus musculus (Mouse).